A 244-amino-acid chain; its full sequence is Nodulation protein G (244 aa).

11–35 provides a ligand contact to NAD(+); that stretch reads VTGASGAIGGAIARVLHAQGAIVGL. Ser-139 serves as a coordination point for substrate. Tyr-152 acts as the Proton acceptor in catalysis.

Belongs to the short-chain dehydrogenases/reductases (SDR) family.

Functionally, proposed to modify Nod factor fatty acyl chain. This Rhizobium meliloti (Ensifer meliloti) protein is Nodulation protein G (nodG).